Here is a 359-residue protein sequence, read N- to C-terminus: MRQILIAVAVALTVSILLTPALIRLFTRQGFGHHTREDGPPTHHAKRGTPSMGGVAIIAGIWAGYLGTHLAGLAFDGEGISASGLLVLGLATVLGIVGFLDDLIKIRRSRNLGLNKTAKTIGQVAAAVLFGVLALGFRNANGLTPASADLSYVREIATVTLAPGLFVLFCVVVVSAWSNAVNFTDGLDGLAAGSMAMVTAAYVLITFWQYRNACVTAPGLGCYNVRDPLDLAIVAAATAGACIGFLWWNAAPAKIFMGDTGSLALGGIIAGISVTSRTEILAVVLGSLFVAEVSSVVLQILTFRTTGRRVFRMAPFHHHFELAGWAETTVIIRFWLLTAIACGLGVALFYGEWLAAIGA.

The next 10 membrane-spanning stretches (helical) occupy residues 3–23 (QILIAVAVALTVSILLTPALI), 55–75 (VAIIAGIWAGYLGTHLAGLAF), 80–100 (ISASGLLVLGLATVLGIVGFL), 117–137 (TAKTIGQVAAAVLFGVLALGF), 156–176 (IATVTLAPGLFVLFCVVVVSA), 187–207 (LDGLAAGSMAMVTAAYVLITF), 231–251 (LAIVAAATAGACIGFLWWNAA), 255–275 (IFMGDTGSLALGGIIAGISVT), 280–300 (ILAVVLGSLFVAEVSSVVLQI), and 334–354 (FWLLTAIACGLGVALFYGEWL).

This sequence belongs to the glycosyltransferase 4 family. MraY subfamily. Requires Mg(2+) as cofactor.

The protein localises to the cell membrane. The catalysed reaction is UDP-N-acetyl-alpha-D-muramoyl-L-alanyl-gamma-D-glutamyl-meso-2,6-diaminopimeloyl-D-alanyl-D-alanine + di-trans,octa-cis-undecaprenyl phosphate = di-trans,octa-cis-undecaprenyl diphospho-N-acetyl-alpha-D-muramoyl-L-alanyl-D-glutamyl-meso-2,6-diaminopimeloyl-D-alanyl-D-alanine + UMP. It functions in the pathway cell wall biogenesis; peptidoglycan biosynthesis. Its function is as follows. Catalyzes the initial step of the lipid cycle reactions in the biosynthesis of the cell wall peptidoglycan: transfers peptidoglycan precursor phospho-MurNAc-pentapeptide from UDP-MurNAc-pentapeptide onto the lipid carrier undecaprenyl phosphate, yielding undecaprenyl-pyrophosphoryl-MurNAc-pentapeptide, known as lipid I. The chain is Phospho-N-acetylmuramoyl-pentapeptide-transferase from Mycolicibacterium paratuberculosis (strain ATCC BAA-968 / K-10) (Mycobacterium paratuberculosis).